A 289-amino-acid chain; its full sequence is 2,3-dimethylmalate lyase (289 aa).

It belongs to the isocitrate lyase/PEP mutase superfamily. Homotetramer. It depends on Mg(2+) as a cofactor.

The catalysed reaction is (2R,3S)-2,3-dimethylmalate = propanoate + pyruvate. The protein operates within cofactor degradation; nicotinate degradation; propanoate and pyruvate from 6-hydroxynicotinate: step 8/8. Completely inhibited by propionic anhydride and by cystamine. Irreversibly inhibited by the mercapto reagents iodoacetate and iodoacetamide. Unaffected by hydroxylamine. In terms of biological role, catalyzes the formation of proponate and pyruvate from (2R,3S)-2,3-dimethylmalate. Has no activity toward dimethylmaleate, malate, citramalate, isocitrate and citrate. This Eubacterium barkeri (Clostridium barkeri) protein is 2,3-dimethylmalate lyase.